Reading from the N-terminus, the 455-residue chain is Notoamide E oxidase notB' (455 aa).

Residues 11-31 (PAILSPADLTVIIVGLGIAGL) form a helical membrane-spanning segment. Residues glutamate 48 and glycine 61 each coordinate FAD. A glycan (N-linked (GlcNAc...) asparagine) is linked at asparagine 75. Arginine 121 is a binding site for FAD. Catalysis depends on residues arginine 199 and tyrosine 229. FAD-binding residues include aspartate 324 and glycine 337.

This sequence belongs to the paxM FAD-dependent monooxygenase family. FAD serves as cofactor.

The protein resides in the membrane. It carries out the reaction notoamide E + NADPH + O2 + H(+) = notoamide C + NADP(+) + H2O. It catalyses the reaction notoamide E + NADPH + O2 + H(+) = notoamide D + NADP(+) + H2O. Its pathway is alkaloid biosynthesis. FAD-dependent monooxygenase; part of the gene cluster that mediates the biosynthesis of notoamide, a fungal indole alkaloid that belongs to a family of natural products containing a characteristic bicyclo[2.2.2]diazaoctane core. The first step of notoamide biosynthesis involves coupling of L-proline and L-tryptophan by the bimodular NRPS notE', to produce cyclo-L-tryptophan-L-proline called brevianamide F. The reverse prenyltransferase notF' then acts as a deoxybrevianamide E synthase and converts brevianamide F to deoxybrevianamide E via reverse prenylation at C-2 of the indole ring leading to the bicyclo[2.2.2]diazaoctane core. Deoxybrevianamide E is further hydroxylated at C-6 of the indole ring, likely catalyzed by the cytochrome P450 monooxygenase notG', to yield 6-hydroxy-deoxybrevianamide E. 6-hydroxy-deoxybrevianamide E is a specific substrate of the prenyltransferase notC' for normal prenylation at C-7 to produce 6-hydroxy-7-prenyl-deoxybrevianamide, also called notoamide S. As the proposed pivotal branching point in notoamide biosynthesis, notoamide S can be diverted to notoamide E through an oxidative pyran ring closure putatively catalyzed by either notH' cytochrome P450 monooxygenase or the notD' FAD-linked oxidoreductase. This step would be followed by an indole 2,3-epoxidation-initiated pinacol-like rearrangement catalyzed by the notB' FAD-dependent monooxygenase leading to the formation of notoamide C and notoamide D. On the other hand notoamide S is converted to notoamide T by notH' (or notD'), a bifunctional oxidase that also functions as the intramolecular Diels-Alderase responsible for generation of (-)-notoamide T. To generate antipodal (+)-notoaminide T, notH (or notD) in Aspergillus strain MF297-2 is expected to catalyze a Diels-Alder reaction leading to the opposite stereochemistry. The remaining oxidoreductase notD' (or notH') likely catalyzes the oxidative pyran ring formation to yield (-)-stephacidin A. The FAD-dependent monooxygenase notI' is highly similar to notB' and is predicted to catalyze a similar conversion from (-)-stephacidin A to (+)-notoamide B via the 2,3-epoxidation of (-)-stephacidin A followed by a pinacol-type rearrangement. Finally, it remains unclear which enzyme could be responsible for the final hydroxylation steps leading to notoamide A and sclerotiamide. This chain is Notoamide E oxidase notB', found in Aspergillus versicolor.